Here is a 437-residue protein sequence, read N- to C-terminus: uncharacterized protein (437 aa).

This is an uncharacterized protein from Rhodococcus erythropolis (Arthrobacter picolinophilus).